The chain runs to 375 residues: DNA replication and repair protein RecF (375 aa).

30–37 (GENAQGKT) contributes to the ATP binding site.

It belongs to the RecF family.

It localises to the cytoplasm. In terms of biological role, the RecF protein is involved in DNA metabolism; it is required for DNA replication and normal SOS inducibility. RecF binds preferentially to single-stranded, linear DNA. It also seems to bind ATP. This is DNA replication and repair protein RecF from Bacillus thuringiensis (strain Al Hakam).